We begin with the raw amino-acid sequence, 191 residues long: Dephospho-CoA kinase (191 aa).

Residues 3–191 (AIGITGSYAS…KLIKDLECRV (189 aa)) form the DPCK domain. Residue 11–16 (ASGKTF) participates in ATP binding.

It belongs to the CoaE family.

Its subcellular location is the cytoplasm. It carries out the reaction 3'-dephospho-CoA + ATP = ADP + CoA + H(+). Its pathway is cofactor biosynthesis; coenzyme A biosynthesis; CoA from (R)-pantothenate: step 5/5. Functionally, catalyzes the phosphorylation of the 3'-hydroxyl group of dephosphocoenzyme A to form coenzyme A. The sequence is that of Dephospho-CoA kinase from Rickettsia prowazekii (strain Madrid E).